The sequence spans 48 residues: Ambineela (48 aa).

As to quaternary structure, monomer. The blue color is due to an unidentified non-fluorescent cofactor, covalently bound to it.

Functionally, ambineela is a blue protein and has a pI of 8.7. The protein is Ambineela of Acidianus ambivalens (Desulfurolobus ambivalens).